The following is a 293-amino-acid chain: Small ribosomal subunit protein uS3 (293 aa).

The KH type-2 domain occupies Val-39 to Arg-107. A disordered region spans residues Arg-210–Glu-293. Over residues Pro-219–Gly-238 the composition is skewed to basic and acidic residues.

It belongs to the universal ribosomal protein uS3 family. In terms of assembly, part of the 30S ribosomal subunit. Forms a tight complex with proteins S10 and S14.

Functionally, binds the lower part of the 30S subunit head. Binds mRNA in the 70S ribosome, positioning it for translation. The protein is Small ribosomal subunit protein uS3 of Paracidovorax citrulli (strain AAC00-1) (Acidovorax citrulli).